We begin with the raw amino-acid sequence, 193 residues long: Ribosomal RNA large subunit methyltransferase E (193 aa).

Gly49, Phe51, Asp69, Asp86, and Asp106 together coordinate S-adenosyl-L-methionine. Lys146 serves as the catalytic Proton acceptor.

Belongs to the class I-like SAM-binding methyltransferase superfamily. RNA methyltransferase RlmE family.

It is found in the cytoplasm. The enzyme catalyses uridine(2552) in 23S rRNA + S-adenosyl-L-methionine = 2'-O-methyluridine(2552) in 23S rRNA + S-adenosyl-L-homocysteine + H(+). Functionally, specifically methylates the uridine in position 2552 of 23S rRNA at the 2'-O position of the ribose in the fully assembled 50S ribosomal subunit. The sequence is that of Ribosomal RNA large subunit methyltransferase E from Brachyspira hyodysenteriae (strain ATCC 49526 / WA1).